Here is a 481-residue protein sequence, read N- to C-terminus: Glutamate--tRNA ligase (481 aa).

The 'HIGH' region signature appears at 10 to 20 (PSPTGHLHIGN). The short motif at 251-255 (KLSKR) is the 'KMSKS' region element. K254 provides a ligand contact to ATP.

This sequence belongs to the class-I aminoacyl-tRNA synthetase family. Glutamate--tRNA ligase type 1 subfamily. As to quaternary structure, monomer.

It localises to the cytoplasm. It catalyses the reaction tRNA(Glu) + L-glutamate + ATP = L-glutamyl-tRNA(Glu) + AMP + diphosphate. In terms of biological role, catalyzes the attachment of glutamate to tRNA(Glu) in a two-step reaction: glutamate is first activated by ATP to form Glu-AMP and then transferred to the acceptor end of tRNA(Glu). In Exiguobacterium sibiricum (strain DSM 17290 / CCUG 55495 / CIP 109462 / JCM 13490 / 255-15), this protein is Glutamate--tRNA ligase.